We begin with the raw amino-acid sequence, 193 residues long: Potassium-transporting ATPase KdpC subunit (193 aa).

The helical transmembrane segment at 7–27 (PALVLFAALTLLTGVAYPLAV) threads the bilayer.

It belongs to the KdpC family. In terms of assembly, the system is composed of three essential subunits: KdpA, KdpB and KdpC.

The protein resides in the cell inner membrane. In terms of biological role, part of the high-affinity ATP-driven potassium transport (or Kdp) system, which catalyzes the hydrolysis of ATP coupled with the electrogenic transport of potassium into the cytoplasm. This subunit acts as a catalytic chaperone that increases the ATP-binding affinity of the ATP-hydrolyzing subunit KdpB by the formation of a transient KdpB/KdpC/ATP ternary complex. This Rhodospirillum rubrum (strain ATCC 11170 / ATH 1.1.1 / DSM 467 / LMG 4362 / NCIMB 8255 / S1) protein is Potassium-transporting ATPase KdpC subunit.